Reading from the N-terminus, the 1578-residue chain is Pentafunctional AROM polypeptide (1578 aa).

A 3-dehydroquinate synthase region spans residues 1–393 (MSVELAKVSI…YGTSAHVVSD (393 aa)). NAD(+)-binding positions include 44 to 46 (DTN), 79 to 82 (EAHK), 110 to 112 (GGV), and aspartate 115. Arginine 126 contacts 7-phospho-2-dehydro-3-deoxy-D-arabino-heptonate. 135–136 (TS) serves as a coordination point for NAD(+). Positions 142 and 148 each coordinate 7-phospho-2-dehydro-3-deoxy-D-arabino-heptonate. An NAD(+)-binding site is contributed by lysine 157. 7-phospho-2-dehydro-3-deoxy-D-arabino-heptonate is bound at residue asparagine 158. NAD(+) contacts are provided by residues 175–178 (WLET) and asparagine 186. Glutamate 190 is a binding site for Zn(2+). 7-phospho-2-dehydro-3-deoxy-D-arabino-heptonate is bound by residues 190–193 (EVIK) and lysine 259. Glutamate 269 acts as the Proton acceptor; for 3-dehydroquinate synthase activity in catalysis. Residues 273-277 (RNLLN) and histidine 280 each bind 7-phospho-2-dehydro-3-deoxy-D-arabino-heptonate. Histidine 280 contacts Zn(2+). Histidine 284 serves as the catalytic Proton acceptor; for 3-dehydroquinate synthase activity. 2 residues coordinate 7-phospho-2-dehydro-3-deoxy-D-arabino-heptonate: histidine 296 and lysine 365. Zn(2+) is bound at residue histidine 296. The segment at 406 to 863 (VHPFNNIPEG…WDVLHSQLGA (458 aa)) is EPSP synthase. The active-site For EPSP synthase activity is cysteine 845. Positions 882–1071 (VVIIGMRAAG…VPSRRSAFVC (190 aa)) are shikimate kinase. 886 to 893 (GMRAAGKS) provides a ligand contact to ATP. Positions 1072–1284 (LTFEDLSDHL…AAPGQLTLAE (213 aa)) are 3-dehydroquinase. The active-site Proton acceptor; for 3-dehydroquinate dehydratase activity is histidine 1189. Lysine 1218 serves as the catalytic Schiff-base intermediate with substrate; for 3-dehydroquinate dehydratase activity. The tract at residues 1297–1578 (AKKFFVIGSP…KAIFDAVTQE (282 aa)) is shikimate dehydrogenase.

It in the N-terminal section; belongs to the sugar phosphate cyclases superfamily. Dehydroquinate synthase family. This sequence in the 2nd section; belongs to the EPSP synthase family. The protein in the 3rd section; belongs to the shikimate kinase family. In the 4th section; belongs to the type-I 3-dehydroquinase family. It in the C-terminal section; belongs to the shikimate dehydrogenase family. Homodimer. Zn(2+) is required as a cofactor.

The protein resides in the cytoplasm. The enzyme catalyses 7-phospho-2-dehydro-3-deoxy-D-arabino-heptonate = 3-dehydroquinate + phosphate. It carries out the reaction 3-dehydroquinate = 3-dehydroshikimate + H2O. It catalyses the reaction shikimate + NADP(+) = 3-dehydroshikimate + NADPH + H(+). The catalysed reaction is shikimate + ATP = 3-phosphoshikimate + ADP + H(+). The enzyme catalyses 3-phosphoshikimate + phosphoenolpyruvate = 5-O-(1-carboxyvinyl)-3-phosphoshikimate + phosphate. The protein operates within metabolic intermediate biosynthesis; chorismate biosynthesis; chorismate from D-erythrose 4-phosphate and phosphoenolpyruvate: step 2/7. It participates in metabolic intermediate biosynthesis; chorismate biosynthesis; chorismate from D-erythrose 4-phosphate and phosphoenolpyruvate: step 3/7. Its pathway is metabolic intermediate biosynthesis; chorismate biosynthesis; chorismate from D-erythrose 4-phosphate and phosphoenolpyruvate: step 4/7. It functions in the pathway metabolic intermediate biosynthesis; chorismate biosynthesis; chorismate from D-erythrose 4-phosphate and phosphoenolpyruvate: step 5/7. The protein operates within metabolic intermediate biosynthesis; chorismate biosynthesis; chorismate from D-erythrose 4-phosphate and phosphoenolpyruvate: step 6/7. The AROM polypeptide catalyzes 5 consecutive enzymatic reactions in prechorismate polyaromatic amino acid biosynthesis. The polypeptide is Pentafunctional AROM polypeptide (Kluyveromyces lactis (strain ATCC 8585 / CBS 2359 / DSM 70799 / NBRC 1267 / NRRL Y-1140 / WM37) (Yeast)).